The sequence spans 616 residues: MALLQISEPGLSAAPHQRRLAVGIDLGTTHSLVATVRSGEAQTLVDSDGRDLLPSVVHYRRDGHSVGWQARDNAARDPENTVSSVKRLMGRSLDDIQQRYPHLPYRFHASDNGLPLIQTPAGNLNPIQVSADILSALAARAEAALGGVPDGVVITVPAYFDDAQRQGTKDAARLAGLHVLRLLNEPTAAAIAYGLDSGKEGVIAIYDLGGGTFDISILRLSRGVFEVLATGGDSALGGDDFDHLLAEWLREQAGIHDRDDRQLDHALRAAAVKAKIALSSAESASVSIAGWQGDITREQFDSLIAPLVKRTLLSCRRTLKDAGLTPEEVLEVVMVGGSTRVPLVREQVGTFFGRTPLTSIDPDKVVAMGAAIQADILVGNKPDSDMLLLDVIPLSLGLETMGGLVEKIIPRNTTIPVARAQEFTTFKDGQSGMMIHVLQGEREMVADCRSLARFSLRGLPPLPAGGAHIRVTFQVDADGLLSVTAMEKSTGVEASIQVKPSYGLSDTEIATMITDSMLNAKEDVGARRLAEQKVEAARVLESLQSALVADAELLSNDEKGVIVAASEHLHTMMQGSDPVAIEAAIKTVDQQTQEFAARRMDASIRRALAGHSVDEV.

This sequence belongs to the heat shock protein 70 family.

Chaperone involved in the maturation of iron-sulfur cluster-containing proteins. Has a low intrinsic ATPase activity which is markedly stimulated by HscB. Involved in the maturation of IscU. This is Chaperone protein HscA from Pectobacterium carotovorum subsp. carotovorum (strain PC1).